A 145-amino-acid chain; its full sequence is Ribonuclease H (145 aa).

An RNase H type-1 domain is found at 1–142 (MDTPVYLYTD…ADDLANRGAA (142 aa)). The Mg(2+) site is built by D10, E48, D70, and D134.

Belongs to the RNase H family. As to quaternary structure, monomer. Mg(2+) serves as cofactor.

Its subcellular location is the cytoplasm. It catalyses the reaction Endonucleolytic cleavage to 5'-phosphomonoester.. Its function is as follows. Endonuclease that specifically degrades the RNA of RNA-DNA hybrids. The sequence is that of Ribonuclease H from Neisseria meningitidis serogroup C / serotype 2a (strain ATCC 700532 / DSM 15464 / FAM18).